A 411-amino-acid polypeptide reads, in one-letter code: CinA-like protein (411 aa).

The protein belongs to the CinA family.

The sequence is that of CinA-like protein from Dictyoglomus thermophilum (strain ATCC 35947 / DSM 3960 / H-6-12).